Reading from the N-terminus, the 158-residue chain is Transcription elongation factor GreA (158 aa).

Belongs to the GreA/GreB family.

Necessary for efficient RNA polymerase transcription elongation past template-encoded arresting sites. The arresting sites in DNA have the property of trapping a certain fraction of elongating RNA polymerases that pass through, resulting in locked ternary complexes. Cleavage of the nascent transcript by cleavage factors such as GreA or GreB allows the resumption of elongation from the new 3'terminus. GreA releases sequences of 2 to 3 nucleotides. This is Transcription elongation factor GreA from Wigglesworthia glossinidia brevipalpis.